A 537-amino-acid chain; its full sequence is ATP synthase subunit beta 1 (537 aa).

164–171 (GGAGVGKT) serves as a coordination point for ATP. Residues 471-537 (PKQSATEKNS…ESLEEPQNGR (67 aa)) form a disordered region. 2 stretches are compositionally biased toward polar residues: residues 473 to 498 (QSATEKNSSMNSDLKPSNSESNSPGP) and 507 to 528 (IPSSAKPNVSQPNTFKQDAQNE).

This sequence belongs to the ATPase alpha/beta chains family. As to quaternary structure, F-type ATPases have 2 components, CF(1) - the catalytic core - and CF(0) - the membrane proton channel. CF(1) has five subunits: alpha(3), beta(3), gamma(1), delta(1), epsilon(1). CF(0) has three main subunits: a(1), b(2) and c(9-12). The alpha and beta chains form an alternating ring which encloses part of the gamma chain. CF(1) is attached to CF(0) by a central stalk formed by the gamma and epsilon chains, while a peripheral stalk is formed by the delta and b chains.

The protein localises to the cell inner membrane. The enzyme catalyses ATP + H2O + 4 H(+)(in) = ADP + phosphate + 5 H(+)(out). Its function is as follows. Produces ATP from ADP in the presence of a proton gradient across the membrane. The catalytic sites are hosted primarily by the beta subunits. This is ATP synthase subunit beta 1 from Pseudoalteromonas atlantica (strain T6c / ATCC BAA-1087).